A 174-amino-acid chain; its full sequence is Adenylate kinase (174 aa).

Residues 12–41 form an NMP region; it reads STGDMLRAAIKAGTLLGLEAKKIIDEGGLV. Residues T13, R18, 39–41, 67–70, and Q74 each bind AMP; these read GLV and GFPR. The segment at 104 to 141 is LID; sequence GRRVHLASGRTYHVTYNPPKVEGKDDVTGEDLIQRDDD. Residues R105 and 114-115 each bind ATP; that span reads TY. AMP contacts are provided by R138 and R149.

The protein belongs to the adenylate kinase family. As to quaternary structure, monomer.

It localises to the cytoplasm. It carries out the reaction AMP + ATP = 2 ADP. It participates in purine metabolism; AMP biosynthesis via salvage pathway; AMP from ADP: step 1/1. Catalyzes the reversible transfer of the terminal phosphate group between ATP and AMP. Plays an important role in cellular energy homeostasis and in adenine nucleotide metabolism. The protein is Adenylate kinase of Neisseria polysaccharea.